A 619-amino-acid polypeptide reads, in one-letter code: Kinesin light chain 4 (619 aa).

Residue Ser-2 is modified to N-acetylserine. One copy of the TPR 1 repeat lies at 55–88 (QQGGHEEGLVHEKARQLRRSMENIELGLSEAQVM). A coiled-coil region spans residues 65 to 155 (HEKARQLRRS…HLEFLRQLRQ (91 aa)). Residues 156–175 (YDEDGHGMEEKEGEATKDSL) show a composition bias toward basic and acidic residues. Residues 156-199 (YDEDGHGMEEKEGEATKDSLDDLFPNEEEEDSGNDLSRGQGAAA) are disordered. Ser-174 is modified (phosphoserine). The segment covering 179-188 (FPNEEEEDSG) has biased composition (acidic residues). TPR repeat units follow at residues 211 to 244 (LRTL…LERT), 253 to 286 (ATML…REST), 295 to 328 (AATL…REKV), 337 to 370 (AKQL…YESQ), and 379 to 412 (ARTK…AHVQ). At Ser-460 the chain carries Phosphoserine. The TPR 7 repeat unit spans residues 464-497 (NTTLKNLGALYRRQGKLEAAETLEECALRSRKQG). 3 positions are modified to phosphoserine: Ser-565, Ser-566, and Ser-590. Residues 571-619 (RKLQGTEPRPSSSSMKRAASLNYLNQPNAAPLQVSRGLSASTVDLSSSS) form a disordered region. Residues 609 to 619 (SASTVDLSSSS) show a composition bias toward low complexity. Phosphothreonine is present on Thr-612.

The protein belongs to the kinesin light chain family. In terms of assembly, oligomeric complex composed of two heavy chains and two light chains.

Its subcellular location is the cytoplasm. It is found in the cytoskeleton. Kinesin is a microtubule-associated force-producing protein that may play a role in organelle transport. The light chain may function in coupling of cargo to the heavy chain or in the modulation of its ATPase activity. The polypeptide is Kinesin light chain 4 (Klc4) (Mus musculus (Mouse)).